The sequence spans 454 residues: Argininosuccinate synthase (454 aa).

ATP is bound by residues 17–25 (AFSGGLDTS) and Ala-43. Tyr-99 is an L-citrulline binding site. Residues Gly-129 and Thr-131 each contribute to the ATP site. 3 residues coordinate L-aspartate: Thr-131, Asn-135, and Asp-136. Residue Asn-135 participates in L-citrulline binding. Asp-136 is a binding site for ATP. L-citrulline-binding residues include Arg-139 and Ser-192. Asp-194 serves as a coordination point for ATP. L-citrulline is bound by residues Thr-201, Glu-203, and Glu-280.

The protein belongs to the argininosuccinate synthase family. Type 2 subfamily. As to quaternary structure, homotetramer.

It is found in the cytoplasm. The catalysed reaction is L-citrulline + L-aspartate + ATP = 2-(N(omega)-L-arginino)succinate + AMP + diphosphate + H(+). It functions in the pathway amino-acid biosynthesis; L-arginine biosynthesis; L-arginine from L-ornithine and carbamoyl phosphate: step 2/3. The polypeptide is Argininosuccinate synthase (Yersinia enterocolitica serotype O:8 / biotype 1B (strain NCTC 13174 / 8081)).